Reading from the N-terminus, the 216-residue chain is FMN-dependent NADH:quinone oxidoreductase (216 aa).

FMN is bound by residues S10 and 15–17 (SIS).

It belongs to the azoreductase type 1 family. In terms of assembly, homodimer. FMN is required as a cofactor.

It carries out the reaction 2 a quinone + NADH + H(+) = 2 a 1,4-benzosemiquinone + NAD(+). The enzyme catalyses N,N-dimethyl-1,4-phenylenediamine + anthranilate + 2 NAD(+) = 2-(4-dimethylaminophenyl)diazenylbenzoate + 2 NADH + 2 H(+). Its function is as follows. Quinone reductase that provides resistance to thiol-specific stress caused by electrophilic quinones. Also exhibits azoreductase activity. Catalyzes the reductive cleavage of the azo bond in aromatic azo compounds to the corresponding amines. This chain is FMN-dependent NADH:quinone oxidoreductase, found in Nocardia farcinica (strain IFM 10152).